Reading from the N-terminus, the 355-residue chain is WD repeat domain phosphoinositide-interacting protein 4 (355 aa).

WD repeat units lie at residues 2 to 40 (SQQR…EKGH) and 185 to 225 (AHQS…QLVE). The L/FRRG motif motif lies at 226–229 (LRRG). A WD 3 repeat occupies 230–269 (TDPATLYCINFSHDSSFLCSSSDKGTVHIFALKDTKLNRR).

This sequence belongs to the WD repeat PROPPIN family.

It localises to the preautophagosomal structure. Component of the autophagy machinery that controls the major intracellular degradation process by which cytoplasmic materials are packaged into autophagosomes and delivered to lysosomes for degradation. Binds phosphatidylinositol 3-phosphate (PtdIns3P). This chain is WD repeat domain phosphoinositide-interacting protein 4 (wdr45), found in Xenopus laevis (African clawed frog).